A 116-amino-acid chain; its full sequence is Methionine-R-sulfoxide reductase B1 (116 aa).

In terms of domain architecture, MsrB spans 1-106 (MSFCSFFGGE…FSSSLKFVPK (106 aa)). Zn(2+) contacts are provided by Cys23, Cys26, Cys71, and Cys74. The Nucleophile role is filled by Sec95. A non-standard amino acid (selenocysteine) is located at residue Sec95.

It belongs to the MsrB Met sulfoxide reductase family. The cofactor is Zn(2+). Truncated MSRB1/SEPX1 proteins produced by failed UGA/Sec decoding are ubiquitinated by the CRL2(FEM1C) E3 ubiquitin-protein ligase complex.

It is found in the cytoplasm. The protein localises to the nucleus. The protein resides in the cytoskeleton. The enzyme catalyses L-methionyl-[protein] + [thioredoxin]-disulfide + H2O = L-methionyl-(R)-S-oxide-[protein] + [thioredoxin]-dithiol. It carries out the reaction [thioredoxin]-disulfide + L-methionine + H2O = L-methionine (R)-S-oxide + [thioredoxin]-dithiol. Its function is as follows. Methionine-sulfoxide reductase that specifically reduces methionine (R)-sulfoxide back to methionine. While in many cases, methionine oxidation is the result of random oxidation following oxidative stress, methionine oxidation is also a post-translational modification that takes place on specific residue. Acts as a regulator of actin assembly by reducing methionine (R)-sulfoxide mediated by MICALs (MICAL1, MICAL2 or MICAL3) on actin, thereby promoting filament repolymerization. Plays a role in innate immunity by reducing oxidized actin, leading to actin repolymerization in macrophages. The chain is Methionine-R-sulfoxide reductase B1 (Msrb1) from Mus musculus (Mouse).